The primary structure comprises 193 residues: Imidazoleglycerol-phosphate dehydratase (193 aa).

This sequence belongs to the imidazoleglycerol-phosphate dehydratase family.

It is found in the cytoplasm. It catalyses the reaction D-erythro-1-(imidazol-4-yl)glycerol 3-phosphate = 3-(imidazol-4-yl)-2-oxopropyl phosphate + H2O. Its pathway is amino-acid biosynthesis; L-histidine biosynthesis; L-histidine from 5-phospho-alpha-D-ribose 1-diphosphate: step 6/9. The polypeptide is Imidazoleglycerol-phosphate dehydratase (Methanoculleus marisnigri (strain ATCC 35101 / DSM 1498 / JR1)).